We begin with the raw amino-acid sequence, 431 residues long: 3-deoxy-D-manno-octulosonic acid transferase (431 aa).

The chain crosses the membrane as a helical; Signal-anchor span at residues 5–27 (WLTSRLYDAFLVCAFFVSAPRIF). Residue Glu-67 is the Proton acceptor of the active site. Residues 275 to 276 (PR), 315 to 317 (MGV), and 342 to 345 (NLLE) contribute to the CMP site.

The protein belongs to the glycosyltransferase group 1 family. Glycosyltransferase 30 subfamily.

Its subcellular location is the cell inner membrane. The enzyme catalyses lipid IVA (E. coli) + CMP-3-deoxy-beta-D-manno-octulosonate = alpha-Kdo-(2-&gt;6)-lipid IVA (E. coli) + CMP + H(+). It carries out the reaction alpha-Kdo-(2-&gt;6)-lipid IVA (E. coli) + CMP-3-deoxy-beta-D-manno-octulosonate = alpha-Kdo-(2-&gt;4)-alpha-Kdo-(2-&gt;6)-lipid IVA (E. coli) + CMP + H(+). The catalysed reaction is alpha-Kdo-(2-&gt;4)-alpha-Kdo-(2-&gt;6)-lipid IVA (E. coli) + CMP-3-deoxy-beta-D-manno-octulosonate = alpha-Kdo-(2-&gt;8)-alpha-Kdo-(2-&gt;4)-alpha-Kdo-(2-&gt;6)-lipid IVA (E. coli) + CMP + H(+). It participates in bacterial outer membrane biogenesis; LPS core biosynthesis. Its function is as follows. Involved in lipopolysaccharide (LPS) biosynthesis. Catalyzes the transfer of three 3-deoxy-D-manno-octulosonate (Kdo) residues from CMP-Kdo to lipid IV(A), the tetraacyldisaccharide-1,4'-bisphosphate precursor of lipid A. Thus generates the genus-specific LPS epitope of Chlamydia, composed of the trisaccharide alpha-Kdo-(2-&gt;8)-alpha-Kdo-(2-&gt;4)-alpha-Kdo. The protein is 3-deoxy-D-manno-octulosonic acid transferase (waaA) of Chlamydia trachomatis serovar A (strain ATCC VR-571B / DSM 19440 / HAR-13).